Here is a 462-residue protein sequence, read N- to C-terminus: ATP synthase subunit beta (462 aa).

ATP is bound at residue 152-159; the sequence is GGAGVGKT.

Belongs to the ATPase alpha/beta chains family. In terms of assembly, F-type ATPases have 2 components, CF(1) - the catalytic core - and CF(0) - the membrane proton channel. CF(1) has five subunits: alpha(3), beta(3), gamma(1), delta(1), epsilon(1). CF(0) has three main subunits: a(1), b(2) and c(9-12). The alpha and beta chains form an alternating ring which encloses part of the gamma chain. CF(1) is attached to CF(0) by a central stalk formed by the gamma and epsilon chains, while a peripheral stalk is formed by the delta and b chains.

The protein resides in the cell inner membrane. It carries out the reaction ATP + H2O + 4 H(+)(in) = ADP + phosphate + 5 H(+)(out). Produces ATP from ADP in the presence of a proton gradient across the membrane. The catalytic sites are hosted primarily by the beta subunits. The chain is ATP synthase subunit beta from Aeromonas hydrophila subsp. hydrophila (strain ATCC 7966 / DSM 30187 / BCRC 13018 / CCUG 14551 / JCM 1027 / KCTC 2358 / NCIMB 9240 / NCTC 8049).